We begin with the raw amino-acid sequence, 197 residues long: GTP cyclohydrolase-2 (197 aa).

50–54 is a GTP binding site; sequence RIHSE. The Zn(2+) site is built by Cys-55, Cys-66, and Cys-68. GTP contacts are provided by residues Gln-71, 93-95, and Thr-115; that span reads EGR. The active-site Proton acceptor is the Asp-127. Catalysis depends on Arg-129, which acts as the Nucleophile. GTP is bound by residues Thr-150 and Lys-155.

This sequence belongs to the GTP cyclohydrolase II family. Requires Zn(2+) as cofactor.

The catalysed reaction is GTP + 4 H2O = 2,5-diamino-6-hydroxy-4-(5-phosphoribosylamino)-pyrimidine + formate + 2 phosphate + 3 H(+). It functions in the pathway cofactor biosynthesis; riboflavin biosynthesis; 5-amino-6-(D-ribitylamino)uracil from GTP: step 1/4. Catalyzes the conversion of GTP to 2,5-diamino-6-ribosylamino-4(3H)-pyrimidinone 5'-phosphate (DARP), formate and pyrophosphate. The protein is GTP cyclohydrolase-2 of Tolumonas auensis (strain DSM 9187 / NBRC 110442 / TA 4).